The chain runs to 428 residues: Autophagy-related protein 14 (428 aa).

The stretch at 82 to 143 (QEAIDRTAEI…RKKQLDKVKD (62 aa)) forms a coiled coil.

It belongs to the ATG14 family. In terms of assembly, component of the autophagy-specific VPS34 PI3-kinase complex I.

It is found in the preautophagosomal structure membrane. It localises to the vacuole membrane. In terms of biological role, required for cytoplasm to vacuole transport (Cvt) and autophagy as a part of the autophagy-specific VPS34 PI3-kinase complex I. This complex is essential to recruit the ATG8-phosphatidylinositol conjugate and the ATG12-ATG5 conjugate to the pre-autophagosomal structure. ATG14 mediates the specific binding of the VPS34 PI3-kinase complex I to the preautophagosomal structure (PAS). Plays a crucial role in hyphal development, conidiogenesis and pathogenicity. Also required for glycogen mobilization, quantity of lipid bodies, and the turgor pressure of appressoria. This chain is Autophagy-related protein 14, found in Pyricularia oryzae (strain 70-15 / ATCC MYA-4617 / FGSC 8958) (Rice blast fungus).